Here is a 538-residue protein sequence, read N- to C-terminus: Sodium/hydrogen exchanger 1 (538 aa).

Residues 1 to 19 lie on the Cytoplasmic side of the membrane; that stretch reads MLDSLVSKLPSLSTSDHAS. A helical membrane pass occupies residues 20-40; the sequence is VVALNLFVALLCACIVLGHLL. The Vacuolar portion of the chain corresponds to 41 to 45; it reads EENRW. A helical membrane pass occupies residues 46–66; sequence MNESITALLIGLGTGVTILLI. Over 67–73 the chain is Cytoplasmic; it reads SKGKSSH. Residues 74–94 constitute an intramembrane region (helical); that stretch reads LLVFSEDLFFIYLLPPIIFNA. Over 95–106 the chain is Cytoplasmic; that stretch reads GFQVKKKQFFRN. The helical transmembrane segment at 107–127 threads the bilayer; that stretch reads FVTIMLFGAVGTIISCTIISL. Residues 128–146 are Vacuolar-facing; it reads GVTQFFKKLDIGTFDLGDY. 2 consecutive intramembrane regions (helical) follow at residues 147–166 and 172–192; these read LAIG…QVLN and LLYS…VVVF. Over 193–216 the chain is Vacuolar; sequence NAIQSFDLTHLNHEAAFHLLGNFL. The chain crosses the membrane as a helical span at residues 217–237; it reads YLFLLSTLLGAATGLISAYVI. The Cytoplasmic segment spans residues 238 to 262; the sequence is KKLYFGRHSTDREVALMMLMAYLSY. A helical membrane pass occupies residues 263-283; sequence MLAELFDLSGILTVFFCGIVM. Over 284 to 302 the chain is Vacuolar; it reads SHYTWHNVTESSRITTKHT. The N-linked (GlcNAc...) asparagine glycan is linked to asparagine 290. A helical membrane pass occupies residues 303 to 323; it reads FATLSFLAETFIFLYVGMDAL. Topologically, residues 324-342 are cytoplasmic; the sequence is DIDKWRSVSDTPGTSIAVS. The helical transmembrane segment at 343–363 threads the bilayer; the sequence is SILMGLVMVGRAAFVFPLSFL. Residues 364 to 378 are Vacuolar-facing; sequence SNLAKKNQSEKINFN. N-linked (GlcNAc...) asparagine glycosylation is present at asparagine 370. The helical transmembrane segment at 379-399 threads the bilayer; sequence MQVVIWWSGLMRGAVSMALAY. At 400-413 the chain is on the cytoplasmic side; it reads NKFTRAGHTDVRGN. Residues 414–434 traverse the membrane as a helical segment; it reads AIMITSTITVCLFSTVVFGML. Residues 435 to 538 are Vacuolar-facing; it reads TKPLISYLLP…ERNPPDLSKA (104 aa). An N-linked (GlcNAc...) asparagine glycan is attached at asparagine 447. Positions 496–518 are interaction with CML18/CAM15; that stretch reads RTVHYYWRQFDDSFMRPVFGGRG.

Belongs to the monovalent cation:proton antiporter 1 (CPA1) transporter (TC 2.A.36) family. Calcium and pH-dependent interaction with CML18/CAM15 (increases when pH decreases, better at pH 5.5 than at pH 7.5). Ubiquitous, with higher levels around vascular tissues and guard cells.

Its subcellular location is the vacuole membrane. It is found in the endoplasmic reticulum membrane. The protein localises to the golgi apparatus membrane. The enzyme catalyses Na(+)(in) + H(+)(out) = Na(+)(out) + H(+)(in). It catalyses the reaction K(+)(in) + H(+)(out) = K(+)(out) + H(+)(in). Functionally, acts in low affinity electroneutral exchange of protons for cations such as Na(+) or K(+) across membranes. Can also exchange Li(+) and Cs(+) with a lower affinity. Involved in vacuolar ion compartmentalization necessary for cell volume regulation and cytoplasmic Na(+) detoxification. Required during leaves expansion, probably to stimulate epidermal cell expansion. Confers competence to grow in high salinity conditions. The polypeptide is Sodium/hydrogen exchanger 1 (NHX1) (Arabidopsis thaliana (Mouse-ear cress)).